The following is a 296-amino-acid chain: Cyclin-dependent kinase 1 (296 aa).

The Protein kinase domain maps to 10-288; that stretch reads YQKLEKLGEG…AKEALLHPYF (279 aa). ATP-binding positions include 16–24 and K39; that span reads LGEGTYGKV. T20 carries the phosphothreonine modification. Position 21 is a phosphotyrosine (Y21). Residue D129 is the Proton acceptor of the active site. T162 is subject to Phosphothreonine; by CAK.

This sequence belongs to the protein kinase superfamily. CMGC Ser/Thr protein kinase family. CDC2/CDKX subfamily. Forms a stable but non-covalent complex with a regulatory subunit and with a cyclin.

The enzyme catalyses L-seryl-[protein] + ATP = O-phospho-L-seryl-[protein] + ADP + H(+). It catalyses the reaction L-threonyl-[protein] + ATP = O-phospho-L-threonyl-[protein] + ADP + H(+). The catalysed reaction is [DNA-directed RNA polymerase] + ATP = phospho-[DNA-directed RNA polymerase] + ADP + H(+). Its activity is regulated as follows. Phosphorylation at Thr-20 or Tyr-21 inactivates the enzyme, while phosphorylation at Thr-162 activates it. Its function is as follows. Plays a key role in the control of the eukaryotic cell cycle. Required for entry into S-phase and mitosis. p34 is a component of the kinase complex that phosphorylates the repetitive C-terminus of RNA polymerase II. In Dictyostelium discoideum (Social amoeba), this protein is Cyclin-dependent kinase 1 (cdk1).